The following is a 261-amino-acid chain: Thioesterase frbD (261 aa).

It belongs to the AMT4 thioesterase family.

It participates in antifungal biosynthesis. Its function is as follows. Thioesterase; part of the gene cluster that mediates the biosynthesis of the antifungal antibiotic FR901469, an inhibitor of beta-1,3-glucansynthase, exerting antifungal activity against the pathogenes Candida albicans and Aspergillus fumigatus. FR901469 is a cyclic depsipeptide containing 12 amino acid residues and a fatty acid chain. The NRPS frbI contains 12 modules responsible for the formation of the depsipeptide backbone which is denoted as Acyl-Thr-Ala-Tyr-Val-4OHPro-Thr-Thr-3OHPro-threo3OHGln-Gly-Thr-Orn-OH (C71H116N14O23). The PKS frbB is probably involved in the production of the hydrocarbon chain, and the acyl-CoA ligase frbC might be involved in the transport of the chain to the peptide ptoduct of frbI. Because FR901469 contains 3 hydroxylated amino acid residues, the 3 oxygenases frbA, frbH, and frbJ might be participating in amino acid hydroxylation. As no thioesterase domains were detected in frbI or frbB, the thioesterases frbD and frbE may instead release and cyclize the products of the NRPS and PKS, respectively. The protein is Thioesterase frbD of Dothideomycetidae sp. (strain 11243) (Fungal sp. (strain No.11243)).